The chain runs to 287 residues: Large ribosomal subunit protein uL2 (287 aa).

Residues 221–287 are disordered; the sequence is RGSVMNPCDH…SKRSRGGRDS (67 aa). Positions 258–287 are enriched in basic residues; the sequence is KTRKRNKPSNRFVLRKRRRVSKRSRGGRDS.

Belongs to the universal ribosomal protein uL2 family. As to quaternary structure, part of the 50S ribosomal subunit. Forms a bridge to the 30S subunit in the 70S ribosome.

Its function is as follows. One of the primary rRNA binding proteins. Required for association of the 30S and 50S subunits to form the 70S ribosome, for tRNA binding and peptide bond formation. It has been suggested to have peptidyltransferase activity; this is somewhat controversial. Makes several contacts with the 16S rRNA in the 70S ribosome. In Prochlorococcus marinus (strain MIT 9211), this protein is Large ribosomal subunit protein uL2.